Here is a 786-residue protein sequence, read N- to C-terminus: MNERSLRILEFNKIKEKIKKYARTNAAKAKVEDLEPYDNLYEINNKLEETNEALEILISKGNPPLEGLADIHEGIERAKKGGTLSPGQLLKVGGMLKATRNMKEFFKREEVEKSYPKLEDLAYILAPVKALEDEIERAIVSEDEISDKASQTLCNIRRSLKEKNSSVREKISSIVRSNSKYLQDDLYTMRGDRYVLPVKSEYKSQVPGLVHDQSSTGATFFIEPMSLVNLNNEIRELFLKEKAEIERILSDLSLKVKINGDSCLSNLKVLVEFDFIFAKGRYASALNAIKPIVREDGAFSIFSGRHPLIENDKVVPSDIYLGEEFQTLMITGPNTGGKTVTIKTVGLLHIMGLSGLLIPARDNSSIAFFKEIFADIGDEQSIEQSLSTFSSHMTNIVNIMKHVDDKSLALFDELGAGTDPAEGAALAVSILETLRNRGAKLIATTHYSELKAYALKTDGVENASVEFDIETLRPTYRLLIGVPGKSNAFEISKRLGLVEGVIKRAKEYMSEENLQFENLIRELQEKSIIAKKEAREAKMLRDQAEDLKKKYEEKLEKLENTREKAYMDARREAKEIIANAKDEADDILKAMRELEKLGIAGGGRQRLEEERKKLKDSLEEREKGIHKMKENEGESITNVTLGMEAYLPSLNQKVIIVSMPDNRGEVQVEAGIMKVNVKLKDLRKTQVTKEEKVRRKREVKLNLSNVESRVDLRGLDAEEACYKADKYLDDAYMANLGEVTIVHGKGTGVLRKAINDMLKRHPHVKSYRLGAYGEGGDGVTMVELKG.

332–339 (GPNTGGKT) serves as a coordination point for ATP. Positions 710 to 785 (VDLRGLDAEE…GDGVTMVELK (76 aa)) constitute a Smr domain.

Belongs to the DNA mismatch repair MutS family. MutS2 subfamily. Homodimer. Binds to stalled ribosomes, contacting rRNA.

Its function is as follows. Endonuclease that is involved in the suppression of homologous recombination and thus may have a key role in the control of bacterial genetic diversity. Functionally, acts as a ribosome collision sensor, splitting the ribosome into its 2 subunits. Detects stalled/collided 70S ribosomes which it binds and splits by an ATP-hydrolysis driven conformational change. Acts upstream of the ribosome quality control system (RQC), a ribosome-associated complex that mediates the extraction of incompletely synthesized nascent chains from stalled ribosomes and their subsequent degradation. Probably generates substrates for RQC. In Clostridium beijerinckii (strain ATCC 51743 / NCIMB 8052) (Clostridium acetobutylicum), this protein is Endonuclease MutS2.